The following is a 544-amino-acid chain: Serine/threonine-protein kinase PAK 3 (544 aa).

The interval 1 to 73 (MSDSLDNEEK…EKERPEISLP (73 aa)) is disordered. 2 positions are modified to phosphoserine: S2 and S4. The span at 18–32 (MNSNNRDSSALNHSS) shows a compositional bias: polar residues. S50 is subject to Phosphoserine; by autocatalysis. A compositionally biased stretch (basic and acidic residues) spans 63-73 (KEKERPEISLP). The segment at 65–108 (KERPEISLPSDFEHTIHVGFDAVTGEFTGIPEQWARLLQTSNIT) is GTPase-binding. The segment at 65 to 135 (KERPEISLPS…YDSKETVNNQ (71 aa)) is autoregulatory region. The CRIB domain maps to 70 to 83 (ISLPSDFEHTIHVG). Residues 84 to 267 (FDAVTGEFTG…IVSVGDPKKK (184 aa)) are linker. The residue at position 139 (S139) is a Phosphoserine; by autocatalysis. Disordered stretches follow at residues 156-197 (SNTK…RPEH) and 213-248 (PAAP…KMTD). S171 is modified (phosphoserine). The segment covering 171-186 (SEEEDEEEEEEEDDNE) has biased composition (acidic residues). Positions 224–235 (SAENANSSTLYR) are enriched in polar residues. One can recognise a Protein kinase domain in the interval 268–519 (YTRFEKIGQG…AKELLQHPFL (252 aa)). ATP contacts are provided by residues 274-282 (IGQGASGTV) and K297. D387 (proton acceptor) is an active-site residue. Position 421 is a phosphothreonine; by autocatalysis (T421).

This sequence belongs to the protein kinase superfamily. STE Ser/Thr protein kinase family. STE20 subfamily. As to quaternary structure, interacts tightly with GTP-bound but not GDP-bound CDC42/p21 and RAC1. Shows highly specific binding to the SH3 domains of phospholipase C-gamma and of adapter protein NCK. Interacts with the C-terminal of APP. Interacts with ARHGEF6 and ARHGEF7. Interacts with GIT1 and GIT2. Requires Mg(2+) as cofactor. Post-translationally, autophosphorylated when activated by CDC42/p21. In terms of processing, neddylated. As to expression, detected at high levels in the brain and at low levels in the testis.

The protein localises to the cytoplasm. The catalysed reaction is L-seryl-[protein] + ATP = O-phospho-L-seryl-[protein] + ADP + H(+). It carries out the reaction L-threonyl-[protein] + ATP = O-phospho-L-threonyl-[protein] + ADP + H(+). Its activity is regulated as follows. Activated by binding small G proteins. Binding of GTP-bound CDC42 or RAC1 to the autoregulatory region releases monomers from the autoinhibited dimer, enables phosphorylation of Thr-421 and allows the kinase domain to adopt an active structure. Functionally, serine/threonine protein kinase that plays a role in a variety of different signaling pathways including cytoskeleton regulation, cell migration, or cell cycle regulation. Plays a role in dendrite spine morphogenesis as well as synapse formation and plasticity. Acts as a downstream effector of the small GTPases CDC42 and RAC1. Activation by the binding of active CDC42 and RAC1 results in a conformational change and a subsequent autophosphorylation on several serine and/or threonine residues. Phosphorylates MAPK4 and MAPK6 and activates the downstream target MAPKAPK5, a regulator of F-actin polymerization and cell migration. Additionally, phosphorylates TNNI3/troponin I to modulate calcium sensitivity and relaxation kinetics of thin myofilaments. May also be involved in early neuronal development. In hippocampal neurons, necessary for the formation of dendritic spines and excitatory synapses; this function is dependent on kinase activity and may be exerted by the regulation of actomyosin contractility through the phosphorylation of myosin II regulatory light chain (MLC). This Rattus norvegicus (Rat) protein is Serine/threonine-protein kinase PAK 3 (Pak3).